The following is a 737-amino-acid chain: Amino-acid acetyltransferase, mitochondrial (737 aa).

Residues 1 to 47 (MSRSTVLGWCTQSCRLLQKHDHSFSFPTFNGSPPLKKRRFCDSAAPA) constitute a mitochondrion transit peptide. A disordered region spans residues 43–78 (SAAPAAPRPSIHRPSEYIPHSKSGGEAPQDLGHKAR). Residues 558 to 727 (GEPALTLDDP…YEGVCRAIEP (170 aa)) form the N-acetyltransferase domain.

This sequence belongs to the acetyltransferase family.

It is found in the mitochondrion. It carries out the reaction L-glutamate + acetyl-CoA = N-acetyl-L-glutamate + CoA + H(+). It functions in the pathway amino-acid biosynthesis; L-arginine biosynthesis; N(2)-acetyl-L-ornithine from L-glutamate: step 1/4. N-acetylglutamate synthase involved in arginine biosynthesis. The protein is Amino-acid acetyltransferase, mitochondrial (ARG2) of Coccidioides immitis (strain RS) (Valley fever fungus).